We begin with the raw amino-acid sequence, 81 residues long: Photosystem I iron-sulfur center (81 aa).

4Fe-4S ferredoxin-type domains are found at residues 2–31 (AHSV…MISW) and 39–68 (IASA…VRVY). Residues C11, C14, C17, C21, C48, C51, C54, and C58 each coordinate [4Fe-4S] cluster.

The eukaryotic PSI reaction center is composed of at least 11 subunits. [4Fe-4S] cluster is required as a cofactor.

It is found in the plastid. The protein localises to the chloroplast thylakoid membrane. The catalysed reaction is reduced [plastocyanin] + hnu + oxidized [2Fe-2S]-[ferredoxin] = oxidized [plastocyanin] + reduced [2Fe-2S]-[ferredoxin]. Its function is as follows. Apoprotein for the two 4Fe-4S centers FA and FB of photosystem I (PSI); essential for photochemical activity. FB is the terminal electron acceptor of PSI, donating electrons to ferredoxin. The C-terminus interacts with PsaA/B/D and helps assemble the protein into the PSI complex. Required for binding of PsaD and PsaE to PSI. PSI is a plastocyanin-ferredoxin oxidoreductase, converting photonic excitation into a charge separation, which transfers an electron from the donor P700 chlorophyll pair to the spectroscopically characterized acceptors A0, A1, FX, FA and FB in turn. The sequence is that of Photosystem I iron-sulfur center (psaC) from Anthoceros angustus (Hornwort).